The chain runs to 353 residues: Photosystem II protein D1 (353 aa).

Threonine 2 is modified (N-acetylthreonine). Threonine 2 is modified (phosphothreonine). 3 helical membrane-spanning segments follow: residues 29 to 46, 118 to 133, and 142 to 156; these read YIGW…TATS, HFLL…EWEL, and WIAV…AATA. Position 118 (histidine 118) interacts with chlorophyll a. Tyrosine 126 serves as a coordination point for pheophytin a. Residues aspartate 170 and glutamate 189 each contribute to the [CaMn4O5] cluster site. Residues 197–218 form a helical membrane-spanning segment; that stretch reads FHMLGVAGVFGGSLFSAMHGSL. Position 198 (histidine 198) interacts with chlorophyll a. A quinone-binding positions include histidine 215 and 264 to 265; that span reads SF. Residue histidine 215 participates in Fe cation binding. Histidine 272 contacts Fe cation. A helical membrane pass occupies residues 274–288; sequence FLAAWPVVGIWFTAL. Residues histidine 332, glutamate 333, aspartate 342, and alanine 344 each coordinate [CaMn4O5] cluster. Residues 345 to 353 constitute a propeptide that is removed on maturation; it reads ALEVPYLNG.

Belongs to the reaction center PufL/M/PsbA/D family. In terms of assembly, PSII is composed of 1 copy each of membrane proteins PsbA, PsbB, PsbC, PsbD, PsbE, PsbF, PsbH, PsbI, PsbJ, PsbK, PsbL, PsbM, PsbT, PsbX, PsbY, PsbZ, Psb30/Ycf12, at least 3 peripheral proteins of the oxygen-evolving complex and a large number of cofactors. It forms dimeric complexes. Requires The D1/D2 heterodimer binds P680, chlorophylls that are the primary electron donor of PSII, and subsequent electron acceptors. It shares a non-heme iron and each subunit binds pheophytin, quinone, additional chlorophylls, carotenoids and lipids. D1 provides most of the ligands for the Mn4-Ca-O5 cluster of the oxygen-evolving complex (OEC). There is also a Cl(-1) ion associated with D1 and D2, which is required for oxygen evolution. The PSII complex binds additional chlorophylls, carotenoids and specific lipids. as cofactor. In terms of processing, phosphorylated in both bundle sheath and mesophyll cells, phosphorylation increases when cells are grown under high rather than low light regimes (70 vs 900 umol photons/m-2/s). Post-translationally, PSII is subject to light-induced damage, in particular to D1. Damaged protein is degraded by Deg1 and FtsH proteases and replaced. In maize mesophyll cells D1 degradation is less extensive in grana (stacked) vs stroma (unstacked) lamellae, in part due to exclusion of FtsH from the grana. D1 degradation is faster in bundle sheath cells. Tyr-161 forms a radical intermediate that is referred to as redox-active TyrZ, YZ or Y-Z. In terms of processing, C-terminally processed by CTPA; processing is essential to allow assembly of the oxygen-evolving complex and thus photosynthetic growth.

Its subcellular location is the plastid. The protein localises to the chloroplast thylakoid membrane. It carries out the reaction 2 a plastoquinone + 4 hnu + 2 H2O = 2 a plastoquinol + O2. Photosystem II (PSII) is a light-driven water:plastoquinone oxidoreductase that uses light energy to abstract electrons from H(2)O, generating O(2) and a proton gradient subsequently used for ATP formation. It consists of a core antenna complex that captures photons, and an electron transfer chain that converts photonic excitation into a charge separation. The D1/D2 (PsbA/PsbD) reaction center heterodimer binds P680, the primary electron donor of PSII as well as several subsequent electron acceptors. This Zea mays (Maize) protein is Photosystem II protein D1.